An 89-amino-acid chain; its full sequence is Small ribosomal subunit protein uS15 (89 aa).

This sequence belongs to the universal ribosomal protein uS15 family. As to quaternary structure, part of the 30S ribosomal subunit. Forms a bridge to the 50S subunit in the 70S ribosome, contacting the 23S rRNA.

In terms of biological role, one of the primary rRNA binding proteins, it binds directly to 16S rRNA where it helps nucleate assembly of the platform of the 30S subunit by binding and bridging several RNA helices of the 16S rRNA. Its function is as follows. Forms an intersubunit bridge (bridge B4) with the 23S rRNA of the 50S subunit in the ribosome. The chain is Small ribosomal subunit protein uS15 from Mycobacterium sp. (strain JLS).